The sequence spans 286 residues: ATP synthase gamma chain (286 aa).

This sequence belongs to the ATPase gamma chain family. In terms of assembly, F-type ATPases have 2 components, CF(1) - the catalytic core - and CF(0) - the membrane proton channel. CF(1) has five subunits: alpha(3), beta(3), gamma(1), delta(1), epsilon(1). CF(0) has three main subunits: a, b and c.

The protein resides in the cell inner membrane. Functionally, produces ATP from ADP in the presence of a proton gradient across the membrane. The gamma chain is believed to be important in regulating ATPase activity and the flow of protons through the CF(0) complex. This Pseudomonas entomophila (strain L48) protein is ATP synthase gamma chain.